A 362-amino-acid polypeptide reads, in one-letter code: Chorismate synthase (362 aa).

Residues Arg-48 and Arg-54 each contribute to the NADP(+) site. Residues 131–133 (RSS), 243–244 (NA), Gly-287, 302–306 (KPTSS), and Arg-328 each bind FMN.

It belongs to the chorismate synthase family. In terms of assembly, homotetramer. The cofactor is FMNH2.

The enzyme catalyses 5-O-(1-carboxyvinyl)-3-phosphoshikimate = chorismate + phosphate. It functions in the pathway metabolic intermediate biosynthesis; chorismate biosynthesis; chorismate from D-erythrose 4-phosphate and phosphoenolpyruvate: step 7/7. Its function is as follows. Catalyzes the anti-1,4-elimination of the C-3 phosphate and the C-6 proR hydrogen from 5-enolpyruvylshikimate-3-phosphate (EPSP) to yield chorismate, which is the branch point compound that serves as the starting substrate for the three terminal pathways of aromatic amino acid biosynthesis. This reaction introduces a second double bond into the aromatic ring system. The sequence is that of Chorismate synthase from Bradyrhizobium diazoefficiens (strain JCM 10833 / BCRC 13528 / IAM 13628 / NBRC 14792 / USDA 110).